The primary structure comprises 528 residues: GMP synthase [glutamine-hydrolyzing] (528 aa).

One can recognise a Glutamine amidotransferase type-1 domain in the interval 13 to 204 (SILILDFGSQ…VYGISSCVAD (192 aa)). The active-site Nucleophile is cysteine 90. Active-site residues include histidine 178 and glutamate 180. In terms of domain architecture, GMPS ATP-PPase spans 205 to 403 (WTTETYIEET…LGLPDEIIKR (199 aa)). 232–238 (SGGVDSS) is an ATP binding site.

In terms of assembly, homodimer.

The catalysed reaction is XMP + L-glutamine + ATP + H2O = GMP + L-glutamate + AMP + diphosphate + 2 H(+). It participates in purine metabolism; GMP biosynthesis; GMP from XMP (L-Gln route): step 1/1. Functionally, catalyzes the synthesis of GMP from XMP. The sequence is that of GMP synthase [glutamine-hydrolyzing] from Prochlorococcus marinus (strain MIT 9312).